Here is a 183-residue protein sequence, read N- to C-terminus: Caltractin ICL1f (183 aa).

The segment covering 1–19 (MARRGQQPPQQQQQAQPAQ) has biased composition (low complexity). Residues 1-30 (MARRGQQPPQQQQQAQPAQKNQAGKFNPAE) form a disordered region. 4 consecutive EF-hand domains span residues 39-74 (EEVL…LGFE), 75-110 (AKNQ…RISE), 112-147 (DSKA…LGET), and 148-183 (MDDS…KTFA). Aspartate 52, aspartate 54, threonine 56, serine 58, glutamate 63, aspartate 88, aspartate 90, serine 92, glutamine 94, and glutamate 99 together coordinate Ca(2+).

This sequence belongs to the centrin family. As to quaternary structure, monomer.

The protein localises to the cytoplasm. It is found in the cytoskeleton. Plays a fundamental role in microtubule organizing center structure and function. Component of the infraciliary lattice (ICL) and the ciliary basal bodies. This is Caltractin ICL1f (Icl1f) from Paramecium tetraurelia.